A 347-amino-acid chain; its full sequence is Protein RecA (347 aa).

Position 68 to 75 (68 to 75 (GPESSGKT)) interacts with ATP.

The protein belongs to the RecA family.

The protein resides in the cytoplasm. In terms of biological role, can catalyze the hydrolysis of ATP in the presence of single-stranded DNA, the ATP-dependent uptake of single-stranded DNA by duplex DNA, and the ATP-dependent hybridization of homologous single-stranded DNAs. It interacts with LexA causing its activation and leading to its autocatalytic cleavage. In Mycobacterium sp. (strain JLS), this protein is Protein RecA.